Consider the following 304-residue polypeptide: Hairy/enhancer-of-split related with YRPW motif protein 1 (304 aa).

The segment at Met-1–Arg-52 is disordered. Positions Glu-28 to Ile-47 are enriched in polar residues. The tract at residues Leu-48 to Ala-117 is transcriptional repression and interaction with NCOR1 and SIN3A. One can recognise a bHLH domain in the interval Ala-49 to Leu-104. Residues Tyr-122 to Leu-158 form the Orange domain. The tract at residues Leu-196–Ser-234 is disordered. The span at Gly-200–Pro-210 shows a compositional bias: polar residues. Positions Tyr-294 to Trp-297 match the YRPW motif motif.

This sequence belongs to the HEY family. Self-associates. Interacts with HES1 and HEYL. Interacts with HDAC1, NCOR1 and SIN3A. Interacts with GATA4 and GATA6. Interacts with CCDC89/BOIP. In terms of tissue distribution, expressed in the somitic mesoderm, the central nervous system, the kidney, the heart, nasal epithelium, and limbs.

It is found in the nucleus. Functionally, transcriptional repressor which binds preferentially to the canonical E box sequence 5'-CACGTG-3'. Downstream effector of Notch signaling required for cardiovascular development. Specifically required for the Notch-induced endocardial epithelial to mesenchymal transition, which is itself criticial for cardiac valve and septum development. May be required in conjunction with HEY2 to specify arterial cell fate or identity. Promotes maintenance of neuronal precursor cells and glial versus neuronal fate specification. Represses transcription by the cardiac transcriptional activators GATA4 and GATA6 and by the neuronal bHLH factors ASCL1/MASH1 and NEUROD4/MATH3. Involved in the regulation of liver cancer cells self-renewal. The polypeptide is Hairy/enhancer-of-split related with YRPW motif protein 1 (HEY1) (Homo sapiens (Human)).